The following is a 469-amino-acid chain: Putative pyridoxal-dependent decarboxylase domain-containing protein 2 (469 aa).

The stretch at 12–40 (TLAEMGKNLKEAVKMLEDSQRRTEEENGK) forms a coiled coil. Residues 28–44 (EDSQRRTEEENGKKLIS) are compositionally biased toward basic and acidic residues. Residues 28 to 47 (EDSQRRTEEENGKKLISRDI) form a disordered region.

The protein belongs to the group II decarboxylase family. Pyridoxal 5'-phosphate is required as a cofactor.

In Homo sapiens (Human), this protein is Putative pyridoxal-dependent decarboxylase domain-containing protein 2 (PDXDC2P).